The following is a 156-amino-acid chain: Probable histone H2A.6 (156 aa).

2 disordered regions span residues 1–26 (MDVG…KKPV) and 129–156 (KKTA…QARS). The span at 9–26 (AAKKAVGRKLGGPKKKPV) shows a compositional bias: basic residues. Basic and acidic residues predominate over residues 130 to 147 (KTAEKADKPAKASKDKAA). The short motif at 149-152 (SPKK) is the SPKK motif element.

Belongs to the histone H2A family. The nucleosome is a histone octamer containing two molecules each of H2A, H2B, H3 and H4 assembled in one H3-H4 heterotetramer and two H2A-H2B heterodimers. The octamer wraps approximately 147 bp of DNA.

It is found in the nucleus. It localises to the chromosome. Its function is as follows. Core component of nucleosome. Nucleosomes wrap and compact DNA into chromatin, limiting DNA accessibility to the cellular machineries which require DNA as a template. Histones thereby play a central role in transcription regulation, DNA repair, DNA replication and chromosomal stability. DNA accessibility is regulated via a complex set of post-translational modifications of histones, also called histone code, and nucleosome remodeling. In Oryza sativa subsp. indica (Rice), this protein is Probable histone H2A.6.